The following is a 938-amino-acid chain: Isoleucine--tRNA ligase (938 aa).

Residues 58 to 68 carry the 'HIGH' region motif; the sequence is PYANGNIHMGH. An L-isoleucyl-5'-AMP-binding site is contributed by glutamate 566. The short motif at 607-611 is the 'KMSKS' region element; the sequence is KMSKS. Lysine 610 provides a ligand contact to ATP. Residues cysteine 906, cysteine 909, cysteine 926, and cysteine 929 each contribute to the Zn(2+) site.

It belongs to the class-I aminoacyl-tRNA synthetase family. IleS type 1 subfamily. As to quaternary structure, monomer. Zn(2+) serves as cofactor.

Its subcellular location is the cytoplasm. The enzyme catalyses tRNA(Ile) + L-isoleucine + ATP = L-isoleucyl-tRNA(Ile) + AMP + diphosphate. In terms of biological role, catalyzes the attachment of isoleucine to tRNA(Ile). As IleRS can inadvertently accommodate and process structurally similar amino acids such as valine, to avoid such errors it has two additional distinct tRNA(Ile)-dependent editing activities. One activity is designated as 'pretransfer' editing and involves the hydrolysis of activated Val-AMP. The other activity is designated 'posttransfer' editing and involves deacylation of mischarged Val-tRNA(Ile). The polypeptide is Isoleucine--tRNA ligase (Nitratidesulfovibrio vulgaris (strain DP4) (Desulfovibrio vulgaris)).